The following is a 478-amino-acid chain: Trigger factor (478 aa).

Positions Met1 to Gln41 are disordered. The 83-residue stretch at Gly197–Pro279 folds into the PPIase FKBP-type domain. A compositionally biased stretch (basic and acidic residues) spans Val455–Asn472. Residues Val455–Thr478 form a disordered region.

Belongs to the FKBP-type PPIase family. Tig subfamily.

The protein resides in the cytoplasm. It catalyses the reaction [protein]-peptidylproline (omega=180) = [protein]-peptidylproline (omega=0). In terms of biological role, involved in protein export. Acts as a chaperone by maintaining the newly synthesized protein in an open conformation. Functions as a peptidyl-prolyl cis-trans isomerase. In Aquifex aeolicus (strain VF5), this protein is Trigger factor.